We begin with the raw amino-acid sequence, 147 residues long: UPF0306 protein YhbP (147 aa).

Belongs to the UPF0306 family.

This Escherichia coli O8 (strain IAI1) protein is UPF0306 protein YhbP.